The chain runs to 475 residues: Ribulose bisphosphate carboxylase large chain (475 aa).

A propeptide spanning residues Met-1–Ser-2 is cleaved from the precursor. Pro-3 carries the N-acetylproline modification. Substrate-binding residues include Thr-65, Asn-123, and Thr-173. The active-site Proton acceptor is the Lys-175. Lys-177 lines the substrate pocket. Residues Lys-201, Asp-203, and Glu-204 each contribute to the Mg(2+) site. N6-carboxylysine is present on Lys-201. Residues Glu-204, His-294, Arg-295, His-327, Lys-334, Ser-379, Gly-381, Gly-403, and Gly-404 each contribute to the substrate site. The active-site Proton acceptor is the His-294.

This sequence belongs to the RuBisCO large chain family. Type I subfamily. As to quaternary structure, heterohexadecamer of 8 large chains and 8 small chains. It depends on Mg(2+) as a cofactor. The disulfide bond which can form between Cys-247 in the large chain dimeric partners within the hexadecamer appears to be associated with oxidative stress and protein turnover. The disulfide bonds reported in 1RBO may be the result of oxidation during crystallization.

It is found in the plastid. The protein resides in the chloroplast. It carries out the reaction 2 (2R)-3-phosphoglycerate + 2 H(+) = D-ribulose 1,5-bisphosphate + CO2 + H2O. The catalysed reaction is D-ribulose 1,5-bisphosphate + O2 = 2-phosphoglycolate + (2R)-3-phosphoglycerate + 2 H(+). Its activity is regulated as follows. Abscisic acid (ABA) causes weak inhibition of RuBisCO catalytic activity, but more potent inhibition of RuBisCO activation. RuBisCO catalyzes two reactions: the carboxylation of D-ribulose 1,5-bisphosphate, the primary event in carbon dioxide fixation, as well as the oxidative fragmentation of the pentose substrate in the photorespiration process. Both reactions occur simultaneously and in competition at the same active site. Binds to abscisic acid (ABA) which has weakly inhibits carboxylation and more strongly inhibits enzyme activation. The chain is Ribulose bisphosphate carboxylase large chain from Spinacia oleracea (Spinach).